The sequence spans 356 residues: DNA polymerase IV (356 aa).

The UmuC domain maps to 6–186 (IVHIDMDAFY…LPVDAFHGIG (181 aa)). 2 residues coordinate Mg(2+): Asp10 and Asp104. The active site involves Glu105.

The protein belongs to the DNA polymerase type-Y family. In terms of assembly, monomer. The cofactor is Mg(2+).

The protein resides in the cytoplasm. The catalysed reaction is DNA(n) + a 2'-deoxyribonucleoside 5'-triphosphate = DNA(n+1) + diphosphate. Functionally, poorly processive, error-prone DNA polymerase involved in untargeted mutagenesis. Copies undamaged DNA at stalled replication forks, which arise in vivo from mismatched or misaligned primer ends. These misaligned primers can be extended by PolIV. Exhibits no 3'-5' exonuclease (proofreading) activity. May be involved in translesional synthesis, in conjunction with the beta clamp from PolIII. This Gluconobacter oxydans (strain 621H) (Gluconobacter suboxydans) protein is DNA polymerase IV.